The sequence spans 279 residues: Lipid phosphate phosphatase epsilon 1, chloroplastic (279 aa).

The N-terminal 88 residues, Met1–Arg88, are a transit peptide targeting the chloroplast. Transmembrane regions (helical) follow at residues Leu126–Leu142, Ser164–Leu184, Gly185–Ile205, Val219–Ser239, and Val255–Phe275.

This sequence belongs to the PA-phosphatase related phosphoesterase family. As to expression, expressed in root tips, root branch points, cotyledons and leaves.

The protein resides in the plastid. It is found in the chloroplast inner membrane. Inhibited by Mg(2+). In terms of biological role, exhibits phosphatidate phosphatase (PAP) activity in vitro. May play a secondary role as PAP in plastids. The sequence is that of Lipid phosphate phosphatase epsilon 1, chloroplastic (LPPE1) from Arabidopsis thaliana (Mouse-ear cress).